A 392-amino-acid chain; its full sequence is MDKSFILNKTSSRSLARRGQLFTAHGKVETPVFCPVGSQATVKTLTPEDLKSVNINMILSNTYHLYLRPGIPIIKEMGGLHKFMNWDGVILTDSGGYQIFSLANLRKLDEGGVSFRSHIDGSTRYITPEDAVSFQQDLGSDIAMVLDECPHSEASENEVLAAMERTHQWAKRCLAAHTLKSQHLFAIVQGGLSPELRRQSAEYLASLDFPGYALGGLSLGEPKDITFETVRHTLRFLPENKPRYLMGVGAPEDLLEGVSCGVDIFDCVLPTRVARNGAFFSRLGRLNIRNAAFATQKGPIDPDCNCYTCRNYSAAYLHHLFRCEEILAYRLATIHNIAFLSNLMQEIRTSIEKDCFEEFKADFLSRYQPTNEAIRIEQKQKWLFGRNGEPPS.

Asp93 (proton acceptor) is an active-site residue. Substrate contacts are provided by residues Asp93–Tyr97, Asp147, Gln189, and Gly216. The segment at Gly247–Asp253 is RNA binding. The active-site Nucleophile is Asp266. Residues Thr271–Arg275 form an RNA binding; important for wobble base 34 recognition region. Zn(2+)-binding residues include Cys304, Cys306, Cys309, and His335.

The protein belongs to the queuine tRNA-ribosyltransferase family. Homodimer. Within each dimer, one monomer is responsible for RNA recognition and catalysis, while the other monomer binds to the replacement base PreQ1. The cofactor is Zn(2+).

The catalysed reaction is 7-aminomethyl-7-carbaguanine + guanosine(34) in tRNA = 7-aminomethyl-7-carbaguanosine(34) in tRNA + guanine. The protein operates within tRNA modification; tRNA-queuosine biosynthesis. Catalyzes the base-exchange of a guanine (G) residue with the queuine precursor 7-aminomethyl-7-deazaguanine (PreQ1) at position 34 (anticodon wobble position) in tRNAs with GU(N) anticodons (tRNA-Asp, -Asn, -His and -Tyr). Catalysis occurs through a double-displacement mechanism. The nucleophile active site attacks the C1' of nucleotide 34 to detach the guanine base from the RNA, forming a covalent enzyme-RNA intermediate. The proton acceptor active site deprotonates the incoming PreQ1, allowing a nucleophilic attack on the C1' of the ribose to form the product. After dissociation, two additional enzymatic reactions on the tRNA convert PreQ1 to queuine (Q), resulting in the hypermodified nucleoside queuosine (7-(((4,5-cis-dihydroxy-2-cyclopenten-1-yl)amino)methyl)-7-deazaguanosine). This is Queuine tRNA-ribosyltransferase from Dehalococcoides mccartyi (strain ATCC BAA-2100 / JCM 16839 / KCTC 5957 / BAV1).